Consider the following 193-residue polypeptide: Coiled-coil domain-containing protein 184 (193 aa).

Residues 39–68 are a coiled coil; it reads GMKELMEHLKAQLQALFEDVRAMRGALDEQ. Residues 101–176 form a disordered region; that stretch reads GLGVAGGKGS…LGENGPLVEP (76 aa). The segment covering 135-146 has biased composition (acidic residues); the sequence is PDEEDEEEEEEK.

The sequence is that of Coiled-coil domain-containing protein 184 (Ccdc184) from Rattus norvegicus (Rat).